The following is a 747-amino-acid chain: uncharacterized protein (747 aa).

Residues 7–27 form a helical membrane-spanning segment; that stretch reads FFLKVISVIAPIVIIPTILAN.

Its subcellular location is the membrane. This is an uncharacterized protein from Ureaplasma parvum serovar 3 (strain ATCC 700970).